A 403-amino-acid chain; its full sequence is Microtubule-associated protein tau (403 aa).

The span at 1 to 32 (MAEPRQEFDVMEDHAQGDYTLQDHEGDMEPGL) shows a compositional bias: basic and acidic residues. A disordered region spans residues 1 to 219 (MAEPRQEFDV…GPMPDLKNVK (219 aa)). The residue at position 2 (Ala-2) is an N-acetylalanine. Tyr-19 is modified (phosphotyrosine). Residue Lys-33 forms a Glycyl lysine isopeptide (Lys-Gly) (interchain with G-Cter in ubiquitin) linkage. Phosphoserine occurs at positions 35 and 50. Over residues 50 to 60 (SETSDAKSTPT) the composition is skewed to polar residues. 3 positions are modified to phosphothreonine: Thr-58, Thr-60, and Thr-71. The segment covering 90 to 106 (KGKDGTGPDDKKAKGAD) has biased composition (basic and acidic residues). Position 115 is a phosphothreonine (Thr-115). At Arg-117 the chain carries Omega-N-methylarginine. Lys-125 carries the post-translational modification N6,N6-dimethyllysine; alternate. Lys-125 carries the post-translational modification N6-acetyllysine; alternate. 4 positions are modified to phosphothreonine: Thr-131, Thr-137, Thr-138, and Thr-143. Residues 136 to 147 (KTTPTPKTSPGT) are compositionally biased toward low complexity. Phosphoserine occurs at positions 153 and 157. Over residues 156–176 (RSGYSSPGSPGTPGSRSRTPS) the composition is skewed to low complexity. Residue Tyr-159 is modified to Phosphotyrosine. Phosphoserine is present on residues Ser-160, Ser-161, and Ser-164. Phosphothreonine is present on residues Thr-167 and Thr-174. Phosphoserine is present on Ser-176. Phosphothreonine is present on Thr-179. Lys-187 carries the post-translational modification N6-acetyllysine. Phosphothreonine is present on Thr-193. Phosphoserine is present on residues Ser-197 and Ser-199. 4 Tau/MAP repeats span residues 206 to 236 (QAAP…GGGK), 237 to 267 (VQII…GGGS), 268 to 298 (VQIV…GGGQ), and 299 to 330 (VEVK…GGGN). A Glycyl lysine isopeptide (Lys-Gly) (interchain with G-Cter in ubiquitin) cross-link involves residue Lys-216. Lys-221 carries the N6-acetyllysine; alternate modification. An N6-methyllysine; alternate modification is found at Lys-221. Residue Lys-221 forms a Glycyl lysine isopeptide (Lys-Gly) (interchain with G-Cter in ubiquitin); alternate linkage. The residue at position 224 (Ser-224) is a Phosphoserine. Lys-229 is covalently cross-linked (Glycyl lysine isopeptide (Lys-Gly) (interchain with G-Cter in ubiquitin)). Lys-243 is subject to N6-acetyllysine; alternate. Lys-243 is covalently cross-linked (Glycyl lysine isopeptide (Lys-Gly) (interchain with G-Cter in ubiquitin); alternate). Residues Ser-247 and Ser-251 each carry the phosphoserine modification. Lys-252 is modified (N6-acetyllysine). A disulfide bridge connects residues Cys-253 and Cys-284. Ser-255 is modified (phosphoserine). Lys-260 bears the N6-acetyllysine; alternate mark. Residue Lys-260 forms a Glycyl lysine isopeptide (Lys-Gly) (interchain with G-Cter in ubiquitin); alternate linkage. A Phosphoserine modification is found at Ser-267. Lys-273 carries the post-translational modification N6,N6-dimethyllysine; alternate. N6-acetyllysine; alternate is present on residues Lys-273, Lys-279, and Lys-283. Residues Lys-273, Lys-279, and Lys-283 each participate in a glycyl lysine isopeptide (Lys-Gly) (interchain with G-Cter in ubiquitin); alternate cross-link. The residue at position 286 (Ser-286) is a Phosphoserine. N6-acetyllysine; alternate is present on residues Lys-293, Lys-305, and Lys-309. Residues Lys-293, Lys-305, and Lys-309 each participate in a glycyl lysine isopeptide (Lys-Gly) (interchain with G-Cter in ubiquitin); alternate cross-link. Arg-311 is subject to Omega-N-methylarginine. Residue Ser-314 is modified to Phosphoserine. Lys-315 participates in a covalent cross-link: Glycyl lysine isopeptide (Lys-Gly) (interchain with G-Cter in ubiquitin). The residue at position 318 (Ser-318) is a Phosphoserine. Lys-331 carries the post-translational modification N6-acetyllysine; alternate. A Glycyl lysine isopeptide (Lys-Gly) (interchain with G-Cter in ubiquitin); alternate cross-link involves residue Lys-331. Lys-337 is covalently cross-linked (Glycyl lysine isopeptide (Lys-Gly) (interchain with G-Cter in ubiquitin)). The residue at position 347 (Lys-347) is an N6-acetyllysine; alternate. Lys-347 participates in a covalent cross-link: Glycyl lysine isopeptide (Lys-Gly) (interchain with G-Cter in ubiquitin); alternate. Tyr-356 carries the post-translational modification Phosphotyrosine. 2 positions are modified to phosphoserine: Ser-358 and Ser-362. Residues 360 to 379 (VVSGDTSPRHLSNVSSTGSI) form a disordered region. Residues 363–378 (GDTSPRHLSNVSSTGS) are compositionally biased toward polar residues. Residue Thr-365 is modified to Phosphothreonine. Ser-366, Ser-371, Ser-378, and Ser-384 each carry phosphoserine. Position 389 is a phosphothreonine (Thr-389).

In terms of assembly, interacts with MARK1, MARK2, MARK3 and MARK4. Interacts with SQSTM1 when polyubiquitinated. Interacts with PSMC2 through SQSTM1. Interacts with FKBP4. Binds to CSNK1D. Interacts with SGK1. Interacts with PIN1. Interacts with LRRK2. Interacts with LRP1, leading to endocytosis; this interaction is reduced in the presence of LRPAP1/RAP. Post-translationally, polyubiquitinated. Requires functional TRAF6 and may provoke SQSTM1-dependent degradation by the proteasome. In terms of processing, phosphorylation at various serine and threonine residues in S-P or T-P motifs by proline-directed protein kinases (PDPK1, CDK1, CDK5, GSK3, MAPK) (a few sites per protein in interphase, more in mitosis), and at serine residues in K-X-G-S motifs by MAP/microtubule affinity-regulating kinase (MARK1, MARK2, MARK3, MARK4), causing detachment from microtubules, and their disassembly. Phosphorylation at Ser-224 by BRSK1 and BRSK2 in neurons affects ability to bind microtubules and plays a role in neuron polarization. Phosphorylated by PHK. Dephosphorylation at several serine and threonine residues by the serine/threonine phosphatase PPP5C. In terms of tissue distribution, expressed in neurons.

It localises to the cytoplasm. Its subcellular location is the cytosol. The protein localises to the cell membrane. The protein resides in the cytoskeleton. It is found in the cell projection. It localises to the axon. Its subcellular location is the dendrite. Its function is as follows. Promotes microtubule assembly and stability, and might be involved in the establishment and maintenance of neuronal polarity. The C-terminus binds axonal microtubules while the N-terminus binds neural plasma membrane components, suggesting that tau functions as a linker protein between both. Axonal polarity is predetermined by tau localization (in the neuronal cell) in the domain of the cell body defined by the centrosome. The short isoforms allow plasticity of the cytoskeleton whereas the longer isoforms may preferentially play a role in its stabilization. The sequence is that of Microtubule-associated protein tau (MAPT) from Capra hircus (Goat).